An 898-amino-acid polypeptide reads, in one-letter code: DNA damage-induced apoptosis suppressor protein (898 aa).

Disordered stretches follow at residues 191-210 (CGSQ…DSDL), 643-670 (SINT…HEGS), and 710-749 (YPIN…FEES). Composition is skewed to polar residues over residues 643–664 (SINT…PSSS) and 710–725 (YPIN…KPSL). The span at 726–741 (QSISPSRYSRPRSQSD) shows a compositional bias: low complexity.

In terms of tissue distribution, highly expressed in the testis, spleen and heart. Expressed at high levels in the primary spermatocytes and to a lesser extent in the round spermatids. Also found in the bone marrow, brain, lung, kidney and liver.

It is found in the cytoplasm. The protein localises to the nucleus. In terms of biological role, may be an anti-apoptotic protein involved in DNA repair or cell survival. The chain is DNA damage-induced apoptosis suppressor protein (Ddias) from Mus musculus (Mouse).